Reading from the N-terminus, the 718-residue chain is GMP synthase [glutamine-hydrolyzing] (718 aa).

Positions 43 to 247 (VIVILDAGSQ…LIDICGCSAN (205 aa)) constitute a Glutamine amidotransferase type-1 domain. Catalysis depends on for GATase activity residues cysteine 128, histidine 221, and glutamate 223. The GMPS ATP-PPase domain maps to 248 to 457 (YTLDDREQQA…LGLSDSLVWR (210 aa)). 275 to 281 (SGGVDST) is an ATP binding site.

As to quaternary structure, homodimer.

It catalyses the reaction XMP + L-glutamine + ATP + H2O = GMP + L-glutamate + AMP + diphosphate + 2 H(+). The protein operates within purine metabolism; GMP biosynthesis; GMP from XMP (L-Gln route): step 1/1. The polypeptide is GMP synthase [glutamine-hydrolyzing] (guaA) (Dictyostelium discoideum (Social amoeba)).